Reading from the N-terminus, the 278-residue chain is Large ribosomal subunit protein uL2 (278 aa).

A disordered region spans residues 222–264; the sequence is RGVAMNPVDHPHGGGEGRTSGGRNPVTPWGVPTKGKKTRSNKR.

It belongs to the universal ribosomal protein uL2 family. In terms of assembly, part of the 50S ribosomal subunit. Forms a bridge to the 30S subunit in the 70S ribosome.

Its function is as follows. One of the primary rRNA binding proteins. Required for association of the 30S and 50S subunits to form the 70S ribosome, for tRNA binding and peptide bond formation. It has been suggested to have peptidyltransferase activity; this is somewhat controversial. Makes several contacts with the 16S rRNA in the 70S ribosome. In Methylobacterium radiotolerans (strain ATCC 27329 / DSM 1819 / JCM 2831 / NBRC 15690 / NCIMB 10815 / 0-1), this protein is Large ribosomal subunit protein uL2.